A 698-amino-acid chain; its full sequence is Auxin response factor 22 (698 aa).

The segment at residues Phe128–Lys230 is a DNA-binding region (TF-B3). Over residues Thr549 to Ala577 the composition is skewed to polar residues. Residues Thr549–Asp579 are disordered. A PB1 domain is found at Ala603–Arg683.

This sequence belongs to the ARF family. As to quaternary structure, homodimers and heterodimers. As to expression, expressed in roots, culms, leaves and young panicles.

The protein localises to the nucleus. Auxin response factors (ARFs) are transcriptional factors that bind specifically to the DNA sequence 5'-TGTCTC-3' found in the auxin-responsive promoter elements (AuxREs). This Oryza sativa subsp. japonica (Rice) protein is Auxin response factor 22 (ARF22).